The sequence spans 309 residues: Dicarboxylate carrier SLC25A8 (309 aa).

Residues 1-16 are Mitochondrial intermembrane-facing; it reads MVGFKATDVPPTATVK. 3 Solcar repeats span residues 11–106, 114–203, and 212–297; these read PTAT…VKQF, ASIG…IKDA, and DDLP…LKRA. The tract at residues 16-63 is important for interaction with long-chain fatty acids; the sequence is KFLGAGTAACIADLITFPLDTAKVRLQIQGESQGPVRATASAQYRGVM. A helical membrane pass occupies residues 17–40; sequence FLGAGTAACIADLITFPLDTAKVR. Over 41-77 the chain is Mitochondrial matrix; sequence LQIQGESQGPVRATASAQYRGVMGTILTMVRTEGPRS. A helical transmembrane segment spans residues 78-103; that stretch reads LYNGLVAGLQRQMSFASVRIGLYDSV. Residues 104–119 are Mitochondrial intermembrane-facing; sequence KQFYTKGSEHASIGSR. Residues 120-145 traverse the membrane as a helical segment; it reads LLAGSTTGALAVAVAQPTDVVKVRFQ. Residues 146-173 lie on the Mitochondrial matrix side of the membrane; that stretch reads AQARAGGGRRYQSTVNAYKTIAREEGFR. Residues 174-199 traverse the membrane as a helical segment; it reads GLWKGTSPNVARNAIVNCAELVTYDL. The Mitochondrial intermembrane portion of the chain corresponds to 200 to 217; sequence IKDALLKANLMTDDLPCH. The helical transmembrane segment at 218 to 242 threads the bilayer; it reads FTSAFGAGFCTTVIASPVDVVKTRY. The Mitochondrial matrix portion of the chain corresponds to 243 to 268; it reads MNSALGQYSSAGHCALTMLQKEGPRA. Residues 269 to 294 form a helical membrane-spanning segment; the sequence is FYKGFMPSFLRLGSWNVVMFVTYEQL. Positions 278 to 285 are important for interaction with long-chain fatty acids; that stretch reads LRLGSWNV. Over 295–309 the chain is Mitochondrial intermembrane; it reads KRALMAACTSREAPF.

It belongs to the mitochondrial carrier (TC 2.A.29) family. As to quaternary structure, homotetramer. Adopts an asymmetrical dimer of dimers functional form. In terms of tissue distribution, widely expressed in adult human tissues, including tissues rich in macrophages. Most expressed in white adipose tissue and skeletal muscle.

The protein resides in the mitochondrion inner membrane. The catalysed reaction is L-aspartate(out) + phosphate(in) + H(+)(in) = L-aspartate(in) + phosphate(out) + H(+)(out). The enzyme catalyses oxaloacetate(out) + phosphate(in) + H(+)(in) = oxaloacetate(in) + phosphate(out) + H(+)(out). It carries out the reaction (S)-malate(out) + phosphate(in) + H(+)(in) = (S)-malate(in) + phosphate(out) + H(+)(out). It catalyses the reaction malonate(out) + phosphate(in) + H(+)(in) = malonate(in) + phosphate(out) + H(+)(out). The catalysed reaction is sulfate(out) + phosphate(in) + H(+)(in) = sulfate(in) + phosphate(out) + H(+)(out). The enzyme catalyses (S)-malate(out) = (S)-malate(in). It carries out the reaction L-aspartate(out) = L-aspartate(in). It catalyses the reaction phosphate(in) = phosphate(out). The catalysed reaction is chloride(in) = chloride(out). The enzyme catalyses H(+)(in) = H(+)(out). It carries out the reaction a long-chain fatty acid(out) = a long-chain fatty acid(in). Its activity is regulated as follows. Inhibited by pyridoxal- 5'-phosphate, bathophenanthroline, tannic acid, bromocresol purple, butylmalonate and phenylsuccinate. Proton conductance is activated by cardiolipin and long-chain free fatty acids and inhibited by purine nucleotides ATP and ADP. Chloride ion transporter activity is inhibited by long-chain free fatty acids. Functionally, antiporter that exports dicarboxylate intermediates of the Krebs cycle in exchange for phosphate plus a proton across the inner membrane of mitochondria, a process driven by mitochondrial motive force with an overall impact on glycolysis, glutaminolysis and glutathione-dependent redox balance. Continuous export of oxaloacetate and related four-carbon dicarboxylates from mitochondrial matrix into the cytosol negatively regulates the oxidation of acetyl-CoA substrates via the Krebs cycle, lowering the ATP/ADP ratio and reactive oxygen species (ROS) production. May mediate inducible proton entry into the mitochondrial matrix affecting ATP turnover as a protection mechanism against oxidative stress. The proton currents are most likely associated with fatty acid flipping across the inner membrane of mitochondria in a metabolic process regulated by free fatty acids and purine nucleotides. Regulates the use of glucose as a source of energy. Required for glucose-induced DRP1-dependent mitochondrial fission and neuron activation in the ventromedial nucleus of the hypothalamus (VMH). This mitochondrial adaptation mechanism modulates the VMH pool of glucose-excited neurons with an impact on systemic glucose homeostasis. Regulates ROS levels and metabolic reprogramming of macrophages during the resolution phase of inflammation. Attenuates ROS production in response to IL33 to preserve the integrity of the Krebs cycle required for persistent production of itaconate and subsequent GATA3-dependent differentiation of inflammation-resolving alternatively activated macrophages. Can unidirectionally transport anions including L-malate, L-aspartate, phosphate and chloride ions. Does not mediate adaptive thermogenesis. This is Dicarboxylate carrier SLC25A8 (UCP2) from Homo sapiens (Human).